The sequence spans 389 residues: Rhizopuspepsin-1 (389 aa).

Residues 1–21 (MKFTLISSCVALAAMTLAVEA) form the signal peptide. A propeptide spans 22–66 (APNGKKINIPLAKNNSYKPSAKNALNKALAKYNRRKVGSGGITTE) (activation peptide). The Peptidase A1 domain occupies 82 to 385 (YYGEVTVGTP…NQEVPEVQIA (304 aa)). D100 is a catalytic residue. A disulfide bond links C113 and C116. Residue D283 is part of the active site. C317 and C350 are oxidised to a cystine.

It belongs to the peptidase A1 family.

The catalysed reaction is Hydrolysis of proteins with broad specificity similar to that of pepsin A, preferring hydrophobic residues at P1 and P1'. Clots milk and activates trypsinogen. Does not cleave 4-Gln-|-His-5, but does cleave 10-His-|-Leu-11 and 12-Val-|-Glu-13 in B chain of insulin.. The sequence is that of Rhizopuspepsin-1 (RNAP) from Rhizopus niveus.